A 126-amino-acid polypeptide reads, in one-letter code: Aspartate 1-decarboxylase (126 aa).

Ser25 serves as the catalytic Schiff-base intermediate with substrate; via pyruvic acid. The residue at position 25 (Ser25) is a Pyruvic acid (Ser). Position 57 (Thr57) interacts with substrate. Tyr58 (proton donor) is an active-site residue. Residue Gly73–Ala75 coordinates substrate.

This sequence belongs to the PanD family. Heterooctamer of four alpha and four beta subunits. The cofactor is pyruvate. Is synthesized initially as an inactive proenzyme, which is activated by self-cleavage at a specific serine bond to produce a beta-subunit with a hydroxyl group at its C-terminus and an alpha-subunit with a pyruvoyl group at its N-terminus.

The protein resides in the cytoplasm. The catalysed reaction is L-aspartate + H(+) = beta-alanine + CO2. It participates in cofactor biosynthesis; (R)-pantothenate biosynthesis; beta-alanine from L-aspartate: step 1/1. In terms of biological role, catalyzes the pyruvoyl-dependent decarboxylation of aspartate to produce beta-alanine. This Methylobacillus flagellatus (strain ATCC 51484 / DSM 6875 / VKM B-1610 / KT) protein is Aspartate 1-decarboxylase.